Consider the following 332-residue polypeptide: Adenosine deaminase (332 aa).

Residues His12 and His14 each coordinate Zn(2+). Substrate is bound by residues His14, Asp16, and Gly170. Position 197 (His197) interacts with Zn(2+). Glu200 acts as the Proton donor in catalysis. Residue Asp278 coordinates Zn(2+).

This sequence belongs to the metallo-dependent hydrolases superfamily. Adenosine and AMP deaminases family. Adenosine deaminase subfamily. Requires Zn(2+) as cofactor.

The catalysed reaction is adenosine + H2O + H(+) = inosine + NH4(+). The enzyme catalyses 2'-deoxyadenosine + H2O + H(+) = 2'-deoxyinosine + NH4(+). Catalyzes the hydrolytic deamination of adenosine and 2-deoxyadenosine. The polypeptide is Adenosine deaminase (Clostridium perfringens (strain 13 / Type A)).